The following is a 266-amino-acid chain: Electron transfer flavoprotein subunit beta (266 aa).

This sequence belongs to the ETF beta-subunit/FixA family. As to quaternary structure, heterodimer of an alpha and a beta subunit. FAD is required as a cofactor. It depends on AMP as a cofactor.

Functionally, the electron transfer flavoprotein serves as a specific electron acceptor for other dehydrogenases. It transfers the electrons to the main respiratory chain via ETF-ubiquinone oxidoreductase (ETF dehydrogenase). The protein is Electron transfer flavoprotein subunit beta (etfB) of Mycobacterium bovis (strain ATCC BAA-935 / AF2122/97).